Reading from the N-terminus, the 562-residue chain is Glutamine--tRNA ligase (562 aa).

The short motif at 35–45 is the 'HIGH' region element; it reads PEPNGYLHIGH. ATP is bound by residues 36-38 and 42-48; these read EPN and HIGHAKS. Residues D68 and Y213 each contribute to the L-glutamine site. Residues T232, 262 to 263, and 270 to 272 contribute to the ATP site; these read RL and LSK. A 'KMSKS' region motif is present at residues 269-273; sequence ILSKR.

This sequence belongs to the class-I aminoacyl-tRNA synthetase family. In terms of assembly, monomer.

It is found in the cytoplasm. It catalyses the reaction tRNA(Gln) + L-glutamine + ATP = L-glutaminyl-tRNA(Gln) + AMP + diphosphate. This is Glutamine--tRNA ligase from Buchnera aphidicola subsp. Schizaphis graminum (strain Sg).